The sequence spans 494 residues: Nuclear distribution protein PAC1 (494 aa).

Positions 14-46 (QKNELDKSVLRYLNWNYKQTVRHEHAQDYESVR) constitute a LisH domain. Residues 90-123 (NSIVRLQKKIIELEQNTETLVSQIKDLNTQVSEL) are a coiled coil. WD repeat units lie at residues 153–192 (NVES…IPLA), 196–244 (SHTK…CKFQ), 251–292 (GHEH…SLKT), 295–334 (PHSQ…SVGT), 347–395 (HFIE…LMAH), 415–454 (GHLS…HVWE), and 457–492 (HTGF…SNVF).

It belongs to the WD repeat LIS1/nudF family. Self-associates. Interacts with NDL1 and dynein.

The protein localises to the cytoplasm. It localises to the cytoskeleton. It is found in the spindle pole. Functionally, positively regulates the activity of the minus-end directed microtubule motor protein dynein. Plays a central role in positioning the mitotic spindle at the bud neck during cell division. Targets cytoplasmic dynein to microtubule plus ends, thereby promoting dynein-mediated microtubule sliding along the bud cortex and consequently the movement of the mitotic spindle to the bud neck. This is Nuclear distribution protein PAC1 from Saccharomyces cerevisiae (strain JAY291) (Baker's yeast).